Reading from the N-terminus, the 538-residue chain is CWF19-like protein 1 (538 aa).

2 disordered regions span residues 259–278 (PDVTENPYRKSGQEASTGKQ) and 298–324 (QGRKRSSTGRDSKSSPHPKQPRKPPQP).

This sequence belongs to the CWF19 family.

This Pongo abelii (Sumatran orangutan) protein is CWF19-like protein 1 (CWF19L1).